The sequence spans 131 residues: Small ribosomal subunit protein uS8 (131 aa).

The protein belongs to the universal ribosomal protein uS8 family. In terms of assembly, part of the 30S ribosomal subunit. Contacts proteins S5 and S12.

One of the primary rRNA binding proteins, it binds directly to 16S rRNA central domain where it helps coordinate assembly of the platform of the 30S subunit. This is Small ribosomal subunit protein uS8 from Aromatoleum aromaticum (strain DSM 19018 / LMG 30748 / EbN1) (Azoarcus sp. (strain EbN1)).